Here is a 115-residue protein sequence, read N- to C-terminus: Phosphoribosyl-ATP pyrophosphatase (115 aa).

This sequence belongs to the PRA-PH family.

Its subcellular location is the cytoplasm. It catalyses the reaction 1-(5-phospho-beta-D-ribosyl)-ATP + H2O = 1-(5-phospho-beta-D-ribosyl)-5'-AMP + diphosphate + H(+). It participates in amino-acid biosynthesis; L-histidine biosynthesis; L-histidine from 5-phospho-alpha-D-ribose 1-diphosphate: step 2/9. This chain is Phosphoribosyl-ATP pyrophosphatase, found in Bordetella parapertussis (strain 12822 / ATCC BAA-587 / NCTC 13253).